The primary structure comprises 1321 residues: Multidrug resistance protein pgp-1 (1321 aa).

At 1–77 the chain is on the cytoplasmic side; sequence MLRNGSLRQS…YTTTLEKLLL (77 aa). One can recognise an ABC transmembrane type-1 1 domain in the interval 77–381; that stretch reads LFIGTLVAVI…AGPQLAVLGT (305 aa). The helical transmembrane segment at 78–98 threads the bilayer; that stretch reads FIGTLVAVITGAGLPLMSILQ. N-linked (GlcNAc...) asparagine glycans are attached at residues Asn-115 and Asn-125. Residues 144–164 form a helical membrane-spanning segment; that stretch reads AMTVGMWAAGQITVTCYLYVA. Asn-190 carries an N-linked (GlcNAc...) asparagine glycan. The next 4 helical transmembrane spans lie at 213-233, 240-260, 321-341, and 350-370; these read KIGM…VAFT, LVML…AKSM, ISFG…FYIG, and LNFG…MALG. Residues 371–753 are Cytoplasmic-facing; that stretch reads LAGPQLAVLG…LYHARPHALS (383 aa). Residues 416 to 652 form the ABC transporter 1 domain; that stretch reads ITVENVHFTY…QGLYYDLVTA (237 aa). Residue 451–458 participates in ATP binding; the sequence is GSSGCGKS. A run of 2 helical transmembrane segments spans residues 754–774 and 798–818; these read LFIG…YSVF and LMFL…TFFM. In terms of domain architecture, ABC transmembrane type-1 2 spans 754–1043; sequence LFIGMSTATI…ATSYFPEYAK (290 aa). N-linked (GlcNAc...) asparagine glycosylation is present at Asn-850. The next 4 membrane-spanning stretches (helical) occupy residues 874–894, 895–915, 978–998, and 1017–1037; these read FSTV…AFFY, GWQM…GQYL, IQGL…TCAY, and VLRV…ATSY. Topologically, residues 1038-1321 are cytoplasmic; it reads FPEYAKATFA…LTQKQMTEKK (284 aa). One can recognise an ABC transporter 2 domain in the interval 1077–1315; it reads VIFKNVRFAY…KGAYYKLTQK (239 aa). 1112-1119 contributes to the ATP binding site; that stretch reads GPSGCGKS.

The protein belongs to the ABC transporter superfamily. ABCB family. Multidrug resistance exporter (TC 3.A.1.201) subfamily. As to expression, intestinal cells.

It is found in the membrane. The enzyme catalyses ATP + H2O + xenobioticSide 1 = ADP + phosphate + xenobioticSide 2.. In terms of biological role, energy-dependent efflux pump responsible for decreased drug accumulation in multidrug-resistant cells. This is Multidrug resistance protein pgp-1 (pgp-1) from Caenorhabditis elegans.